The following is a 106-amino-acid chain: Putative double-stranded DNA mimic protein VP1949 (106 aa).

This sequence belongs to the putative dsDNA mimic protein family.

In terms of biological role, may act as a double-stranded DNA (dsDNA) mimic. Probably regulates the activity of a dsDNA-binding protein. This chain is Putative double-stranded DNA mimic protein VP1949, found in Vibrio parahaemolyticus serotype O3:K6 (strain RIMD 2210633).